The primary structure comprises 332 residues: MKVAVLGAGAWGTALAGHLAARHDTLLWARDAALIAGLQARHENSRYLDGIALPDALRYDADLGVALAHGAADDALCVIAAPVAGLRTLCHAMRDAGCVPAHIVWVCKGFEADTHLLPHQVIAAELPGQQSNGVLSGPSFAREVGQSLPVALTVASTSAGCRERTLAAFHHGAMRIYTGDDVVGVEVGGAVKNVLAIATGISDGLGLGLNARAALITRGLAEMSRLGVALGGRAETFTGLTGLGDLILTATGDLSRNRTVGLQLAAGRTLNDILGALGHVAEGVRCAQAVLALARAQSIEMPIAEAVCGVLFDGIAPRDAVSGLLRRDARAE.

NADPH is bound by residues W11, R30, and K108. Positions 108, 137, and 139 each coordinate sn-glycerol 3-phosphate. NADPH is bound at residue A141. Residues K192, D245, S255, R256, and N257 each contribute to the sn-glycerol 3-phosphate site. Residue K192 is the Proton acceptor of the active site. R256 serves as a coordination point for NADPH. V280 and E282 together coordinate NADPH.

This sequence belongs to the NAD-dependent glycerol-3-phosphate dehydrogenase family.

The protein localises to the cytoplasm. It catalyses the reaction sn-glycerol 3-phosphate + NAD(+) = dihydroxyacetone phosphate + NADH + H(+). The catalysed reaction is sn-glycerol 3-phosphate + NADP(+) = dihydroxyacetone phosphate + NADPH + H(+). It functions in the pathway membrane lipid metabolism; glycerophospholipid metabolism. In terms of biological role, catalyzes the reduction of the glycolytic intermediate dihydroxyacetone phosphate (DHAP) to sn-glycerol 3-phosphate (G3P), the key precursor for phospholipid synthesis. This chain is Glycerol-3-phosphate dehydrogenase [NAD(P)+], found in Burkholderia cenocepacia (strain ATCC BAA-245 / DSM 16553 / LMG 16656 / NCTC 13227 / J2315 / CF5610) (Burkholderia cepacia (strain J2315)).